A 667-amino-acid polypeptide reads, in one-letter code: MKAIVFAYHDIGCVGLNALAEAGYDIQAVFTHTDNPGENRFFSSVARVAADLALPVFAPEDVNHPLWVERIRELQPDIIFSFYYRNMLSDEILSLAPQGGFNLHGSLLPQYRGRAPINWVLVNGETETGVTLHQMVKKADAGPIAGQYKVAISDVDTALTLHAKMRDAAQELLRNLLPRMKEGPLPLTPQKEADASYFGRRTAADGEIHWQKSAFTINNLVRAVTEPYPGAFSYLGQRKLTIWRSRPLDLVHNKLPGTVLSTAPLTVACGEGALEIITGKGEAGLYVQGDRLAQEMGIVTDVRLGNKPSNTLKRRTRVLILGVNGFIGNHLTERLLQDDRYEVYGLDIGSDAISRFLGNPAFHFVEGDISIHSEWIEYHIKKCDVILPLVAIATPIEYTRNPLRVFELDFEENLKIVRDCVKYNKRIVFPSTSEVYGMCDDKEFDEDTSRLIVGPINKQRWIYSVSKQLLDRVIWAYGVKEGLKFTLFRPFNWMGPRLDNLDAARIGSSRAITQLILNLVEGSPIKLVDGGAQKRCFTDIHDGIEALFRIIENRDGCCDGQIINIGNPTNEASIRELAEMLLTSFENHELRDHFPPFAGFKDIESSAYYGKGYQDVEYRTPSIKNARRILHWQPEIAMQQTVTETLDFFLRAAVIEKTAAPKDELNA.

The interval 1–304 (MKAIVFAYHD…EMGIVTDVRL (304 aa)) is formyltransferase ArnAFT. The active-site Proton donor; for formyltransferase activity is His-104. (6R)-10-formyltetrahydrofolate-binding positions include Arg-114 and 136–140 (VKKAD). Positions 314 to 667 (RRTRVLILGV…TAAPKDELNA (354 aa)) are dehydrogenase ArnADH. NAD(+) contacts are provided by residues Asp-347 and 368-369 (DI). Residues Ala-393, Tyr-398, and 432–433 (TS) each bind UDP-alpha-D-glucuronate. The Proton acceptor; for decarboxylase activity role is filled by Glu-434. Residues Arg-460, Asn-492, 526–535 (KLVDGGAQKR), and Tyr-613 contribute to the UDP-alpha-D-glucuronate site. Arg-619 serves as the catalytic Proton donor; for decarboxylase activity.

It in the N-terminal section; belongs to the Fmt family. UDP-L-Ara4N formyltransferase subfamily. The protein in the C-terminal section; belongs to the NAD(P)-dependent epimerase/dehydratase family. UDP-glucuronic acid decarboxylase subfamily. As to quaternary structure, homohexamer, formed by a dimer of trimers.

It carries out the reaction UDP-alpha-D-glucuronate + NAD(+) = UDP-beta-L-threo-pentopyranos-4-ulose + CO2 + NADH. The catalysed reaction is UDP-4-amino-4-deoxy-beta-L-arabinose + (6R)-10-formyltetrahydrofolate = UDP-4-deoxy-4-formamido-beta-L-arabinose + (6S)-5,6,7,8-tetrahydrofolate + H(+). Its pathway is nucleotide-sugar biosynthesis; UDP-4-deoxy-4-formamido-beta-L-arabinose biosynthesis; UDP-4-deoxy-4-formamido-beta-L-arabinose from UDP-alpha-D-glucuronate: step 1/3. It functions in the pathway nucleotide-sugar biosynthesis; UDP-4-deoxy-4-formamido-beta-L-arabinose biosynthesis; UDP-4-deoxy-4-formamido-beta-L-arabinose from UDP-alpha-D-glucuronate: step 3/3. The protein operates within bacterial outer membrane biogenesis; lipopolysaccharide biosynthesis. Bifunctional enzyme that catalyzes the oxidative decarboxylation of UDP-glucuronic acid (UDP-GlcUA) to UDP-4-keto-arabinose (UDP-Ara4O) and the addition of a formyl group to UDP-4-amino-4-deoxy-L-arabinose (UDP-L-Ara4N) to form UDP-L-4-formamido-arabinose (UDP-L-Ara4FN). The modified arabinose is attached to lipid A and is required for resistance to polymyxin and cationic antimicrobial peptides. This Yersinia pseudotuberculosis serotype O:3 (strain YPIII) protein is Bifunctional polymyxin resistance protein ArnA.